The sequence spans 173 residues: MLVDIVPIGDLPAQVKREASAALRGVYECDVTVHEEQSIPDGAFDHSRSQYRAEQFIELASRIGSGEKNIGITAEDLYYRRRNYVFGLAYLNGNGSVISTYRLQTSSDGGLKSKSPDAVFADRIRKEVVHEIGHTFGLEHCDNSKCVMSFSPTVREVDVKEENLCGSCNRLLY.

His130 is a Zn(2+) binding site. Glu131 (proton acceptor) is an active-site residue. Zn(2+) contacts are provided by His134, His140, Cys141, Cys146, Cys165, and Cys168.

This sequence belongs to the peptidase M54 family. As to quaternary structure, monomer. Requires Zn(2+) as cofactor.

Its function is as follows. Probable zinc metalloprotease whose natural substrate is unknown. This chain is Archaemetzincin, found in Haloquadratum walsbyi (strain DSM 16790 / HBSQ001).